A 280-amino-acid chain; its full sequence is Bis(5'-nucleosyl)-tetraphosphatase, symmetrical (280 aa).

The protein belongs to the Ap4A hydrolase family.

It catalyses the reaction P(1),P(4)-bis(5'-adenosyl) tetraphosphate + H2O = 2 ADP + 2 H(+). Functionally, hydrolyzes diadenosine 5',5'''-P1,P4-tetraphosphate to yield ADP. This chain is Bis(5'-nucleosyl)-tetraphosphatase, symmetrical, found in Escherichia coli O17:K52:H18 (strain UMN026 / ExPEC).